A 950-amino-acid chain; its full sequence is Calcium-transporting ATPase 1 (950 aa).

Residue Ser2 is modified to N-acetylserine. At 2-92 (SDNPFNASLL…SLFKKFLSNF (91 aa)) the chain is on the cytoplasmic side. The chain crosses the membrane as a helical span at residues 93–111 (IEDRMILLLIGSAVVSLFM). Topologically, residues 112–116 (GNIDD) are lumenal. The chain crosses the membrane as a helical span at residues 117 to 133 (AVSITLAIFIVVTVGFV). At 134–288 (QEYRSEKSLE…LQLTMDKLGK (155 aa)) the chain is on the cytoplasmic side. Residue Ser227 is modified to Phosphoserine. Residues 289–309 (DLSLVSFIVIGMICLVGIIQG) form a helical membrane-spanning segment. The Lumenal segment spans residues 310–323 (RSWLEMFQISVSLA). Residues 324–344 (VAAIPEGLPIIVTVTLALGVL) traverse the membrane as a helical segment. The Cytoplasmic segment spans residues 345–814 (RMAKRKAIVR…KILTHDVMKR (470 aa)). Residue Asp371 is the 4-aspartylphosphate intermediate of the active site. Residues 815-835 (LLTTAACIIVGTVYIFVKEMA) form a helical membrane-spanning segment. Over 836–844 (EDGKVTARD) the chain is Lumenal. Residues 845 to 862 (TTMTFTCFVFFDMFNALA) form a helical membrane-spanning segment. Over 863-884 (CRHNTKSIFEIGFFTNKMFNYA) the chain is Cytoplasmic. The chain crosses the membrane as a helical span at residues 885–905 (VGLSLLGQMCAIYIPFFQSIF). At 906–909 (KTEK) the chain is on the lumenal side. A helical transmembrane segment spans residues 910–930 (LGISDILLLLLISSSVFIVDE). Topologically, residues 931–950 (LRKLWTRKKNEEDSTYFSNV) are cytoplasmic.

It belongs to the cation transport ATPase (P-type) (TC 3.A.3) family.

Its subcellular location is the golgi apparatus membrane. The catalysed reaction is Ca(2+)(in) + ATP + H2O = Ca(2+)(out) + ADP + phosphate + H(+). This magnesium-dependent enzyme catalyzes the hydrolysis of ATP coupled with the transport of calcium. Has a role in the secretory pathway. The protein is Calcium-transporting ATPase 1 (PMR1) of Saccharomyces cerevisiae (strain ATCC 204508 / S288c) (Baker's yeast).